We begin with the raw amino-acid sequence, 434 residues long: MPIITDVYAREVLDSRGNPTVEVEVLTESGAFGRALVPSGASTGEHEAVELRDGDKSRYLGKGVTKAVENVNEMIAPEIVEGEFSVLDQVSIDKMMIQLDGTHNKGKLGANAILGVSIAVARAAADLLGQPLYKYLGGFNGKQLPVPMMNIVNGGSHSDAPIAFQEFMILPVGAESFKESLRWGAEIFHNLKSILSERGLETAVGDEGGFAPRFEGTEDAVETIIKAIEKAGYKPGEDVFLGFDCASSEFYENGVYDYTKFEGEHGAKRSAAEQVDYLEELIGKYPIITIEDGMDENDWEGWKQLTDRIGDKVQLVGDDLFVTNTEILSKGIEQGIGNSILIKVNQIGTLTETFDAIEMAQKAGYTAVVSHRSGETEDTTIADIAVATNAGQIKTGSLSRTDRIAKYNQLLRIEDELYETAKFEGIKSFYNLDK.

A (2R)-2-phosphoglycerate-binding site is contributed by Gln165. Glu207 acts as the Proton donor in catalysis. Residues Asp244, Glu291, and Asp318 each contribute to the Mg(2+) site. 4 residues coordinate (2R)-2-phosphoglycerate: Lys343, Arg372, Ser373, and Lys394. Lys343 (proton acceptor) is an active-site residue.

It belongs to the enolase family. It depends on Mg(2+) as a cofactor.

The protein resides in the cytoplasm. The protein localises to the secreted. It is found in the cell surface. The catalysed reaction is (2R)-2-phosphoglycerate = phosphoenolpyruvate + H2O. Its pathway is carbohydrate degradation; glycolysis; pyruvate from D-glyceraldehyde 3-phosphate: step 4/5. In terms of biological role, catalyzes the reversible conversion of 2-phosphoglycerate (2-PG) into phosphoenolpyruvate (PEP). It is essential for the degradation of carbohydrates via glycolysis. In Staphylococcus epidermidis (strain ATCC 35984 / DSM 28319 / BCRC 17069 / CCUG 31568 / BM 3577 / RP62A), this protein is Enolase.